A 421-amino-acid polypeptide reads, in one-letter code: ATP-dependent RNA helicase RhlB (421 aa).

The Q motif signature appears at 9–37 (QKFSDFALHPQVVEALEKKGFYNCTPIQA). One can recognise a Helicase ATP-binding domain in the interval 40-219 (LPLTLAGRDV…FEQMNNAEYV (180 aa)). 53–60 (AQTGTGKT) serves as a coordination point for ATP. Residues 165–168 (DEAD) carry the DEAD box motif. Residues 245 to 390 (RLLQTLIEEE…VSKYNPEALM (146 aa)) form the Helicase C-terminal domain. The segment at 396–421 (PLRLTRSRPGNGPRRAGAPRNRRRSG) is disordered. Residues 402–414 (SRPGNGPRRAGAP) show a composition bias toward low complexity.

Belongs to the DEAD box helicase family. RhlB subfamily. In terms of assembly, component of the RNA degradosome, which is a multiprotein complex involved in RNA processing and mRNA degradation.

It localises to the cytoplasm. It catalyses the reaction ATP + H2O = ADP + phosphate + H(+). Functionally, DEAD-box RNA helicase involved in RNA degradation. Has RNA-dependent ATPase activity and unwinds double-stranded RNA. The protein is ATP-dependent RNA helicase RhlB of Salmonella paratyphi A (strain AKU_12601).